We begin with the raw amino-acid sequence, 677 residues long: Probable sulfate transporter 4.2 (677 aa).

The Cytoplasmic portion of the chain corresponds to 1–83; the sequence is MSLAVKDLST…RTYRWHQYFK (83 aa). A helical transmembrane segment spans residues 84–104; sequence LDLMAGITVGIMLVPQAMSYA. Residues 105–108 are Extracellular-facing; it reads RLAG. A helical transmembrane segment spans residues 109 to 129; it reads LQPIYGLYSSFVPVFVYAVFG. At 130–133 the chain is on the cytoplasmic side; it reads SSRQ. Residues 134 to 154 form a helical membrane-spanning segment; the sequence is LAVGPVALVSLLVSNALSGIV. The Extracellular segment spans residues 155–161; it reads DPSEELY. Residues 162 to 182 traverse the membrane as a helical segment; that stretch reads TELAILLALMVGIFESIMGFL. The Cytoplasmic portion of the chain corresponds to 183–189; that stretch reads RLGWLIR. The helical transmembrane segment at 190 to 210 threads the bilayer; the sequence is FISHSVISGFTTASAVVIGLS. At 211–241 the chain is on the extracellular side; the sequence is QLKYFLGYSVSRSSKIMPVIDSIIAGADQFK. The helical transmembrane segment at 242–262 threads the bilayer; the sequence is WPPFLLGCTILVILLVMKHVG. Over 263 to 269 the chain is Cytoplasmic; that stretch reads KAKKELR. The helical transmembrane segment at 270–290 threads the bilayer; sequence FIRAAGPLTGLALGTIIAKVF. The Extracellular portion of the chain corresponds to 291-318; that stretch reads HPPSITLVGDIPQGLPKFSFPKSFDHAK. A helical membrane pass occupies residues 319-339; the sequence is LLLPTSALITGVAILESVGIA. Residues 340 to 355 lie on the Cytoplasmic side of the membrane; that stretch reads KALAAKNRYELDSNSE. A helical transmembrane segment spans residues 356 to 376; the sequence is LFGLGVANIFGSLFSAYPTTG. Residues 377 to 392 are Extracellular-facing; the sequence is SFSRSAVNSESEAKTG. The helical transmembrane segment at 393-413 threads the bilayer; the sequence is LSGLVTGIIIGCSLLFLTPMF. The Cytoplasmic portion of the chain corresponds to 414-420; sequence KFIPQCA. A helical membrane pass occupies residues 421-441; sequence LAAIVISAVSGLVDYEGAIFL. Residues 442 to 459 are Extracellular-facing; sequence WRVDKRDFTLWTITSTTT. The chain crosses the membrane as a helical span at residues 460-480; it reads LFFGIEIGVLIGVGFSLAFVI. The Cytoplasmic portion of the chain corresponds to 481 to 677; it reads HESANPHIAV…LEEPLLSREK (197 aa). In terms of domain architecture, STAS spans 505–629; the sequence is QYPEAYTYNG…VRVHDAVQVC (125 aa).

Belongs to the SLC26A/SulP transporter (TC 2.A.53) family.

The protein localises to the membrane. H(+)/sulfate cotransporter that may play a role in the regulation of sulfate assimilation. The sequence is that of Probable sulfate transporter 4.2 (SULTR4;2) from Arabidopsis thaliana (Mouse-ear cress).